We begin with the raw amino-acid sequence, 310 residues long: Ribosomal protein L11 methyltransferase (310 aa).

Residues Thr-156, Gly-179, Asp-201, and Asn-246 each coordinate S-adenosyl-L-methionine.

This sequence belongs to the methyltransferase superfamily. PrmA family.

Its subcellular location is the cytoplasm. It carries out the reaction L-lysyl-[protein] + 3 S-adenosyl-L-methionine = N(6),N(6),N(6)-trimethyl-L-lysyl-[protein] + 3 S-adenosyl-L-homocysteine + 3 H(+). Functionally, methylates ribosomal protein L11. In Desulfatibacillum aliphaticivorans, this protein is Ribosomal protein L11 methyltransferase.